We begin with the raw amino-acid sequence, 75 residues long: Putative defensin-like protein 119 (75 aa).

The signal sequence occupies residues 1–25 (MAKSTIFAIFMIVFVLGMVTKETKG). Disulfide bonds link Cys-29–Cys-73, Cys-39–Cys-58, Cys-44–Cys-67, and Cys-48–Cys-69.

This sequence belongs to the DEFL family.

The protein localises to the secreted. This Arabidopsis thaliana (Mouse-ear cress) protein is Putative defensin-like protein 119 (LCR53).